The chain runs to 541 residues: Peptidyl-prolyl isomerase cwc-27 (541 aa).

Residues 11-193 form the PPIase cyclophilin-type domain; sequence PTASAIIHTT…YPIKITRIEI (183 aa). Disordered stretches follow at residues 199–443 and 513–541; these read DDMQ…GQAD and TLKE…RDRH. Basic and acidic residues-rich tracts occupy residues 279–307, 316–348, and 361–374; these read AKRD…ESRR, QKKE…KTNE, and IHSE…KKSA. Acidic residues predominate over residues 432–442; it reads DVEDGEQDGQA. 2 stretches are compositionally biased toward basic and acidic residues: residues 513-525 and 532-541; these read TLKE…RDAK and AWDRGRRDRH.

This sequence belongs to the cyclophilin-type PPIase family. CWC27 subfamily. As to quaternary structure, associated with the spliceosome.

It localises to the cytoplasm. It is found in the nucleus. It carries out the reaction [protein]-peptidylproline (omega=180) = [protein]-peptidylproline (omega=0). Functionally, PPIases accelerate the folding of proteins. It catalyzes the cis-trans isomerization of proline imidic peptide bonds in oligopeptides. Involved in pre-mRNA splicing. The polypeptide is Peptidyl-prolyl isomerase cwc-27 (cwc-27) (Neurospora crassa (strain ATCC 24698 / 74-OR23-1A / CBS 708.71 / DSM 1257 / FGSC 987)).